Consider the following 67-residue polypeptide: UPF0337 protein SP_1805 (67 aa).

Residues 1–30 (MSVEEKLNQAKGSIKEGVGKAIGDEKMEKE) form a disordered region.

The protein belongs to the UPF0337 (CsbD) family.

This chain is UPF0337 protein SP_1805, found in Streptococcus pneumoniae serotype 4 (strain ATCC BAA-334 / TIGR4).